The primary structure comprises 102 residues: Small ribosomal subunit protein uS10 (102 aa).

The protein belongs to the universal ribosomal protein uS10 family. As to quaternary structure, part of the 30S ribosomal subunit.

Its function is as follows. Involved in the binding of tRNA to the ribosomes. In Agrobacterium fabrum (strain C58 / ATCC 33970) (Agrobacterium tumefaciens (strain C58)), this protein is Small ribosomal subunit protein uS10.